We begin with the raw amino-acid sequence, 185 residues long: Proton-translocating ferredoxin:NAD(+) oxidoreductase complex subunit G (185 aa).

A helical membrane pass occupies residues 14–34; the sequence is TKNLTITCFISGIIIAAVYYI. Position 161 is an FMN phosphoryl threonine (Thr-161).

Belongs to the RnfG family. In terms of assembly, the complex is composed of six subunits: RnfA, RnfB, RnfC, RnfD, RnfE and RnfG. It depends on FMN as a cofactor.

The protein localises to the cell membrane. Functionally, part of a membrane-bound complex that couples electron transfer with translocation of ions across the membrane. Couples electron transfer from reduced ferredoxin to NAD(+) with translocation of H(+) out of the cell. Essential for energy conservation during autotrophic growth. Contributes to ATP synthesis during heterotrophic growth. The chain is Proton-translocating ferredoxin:NAD(+) oxidoreductase complex subunit G from Clostridium ljungdahlii (strain ATCC 55383 / DSM 13528 / PETC).